Reading from the N-terminus, the 382-residue chain is Queuine tRNA-ribosyltransferase (382 aa).

Residue Asp96 is the Proton acceptor of the active site. Substrate contacts are provided by residues 96 to 100 (DSGGF), Asp151, Gln194, and Gly221. Residues 252–258 (GVGAPDS) form an RNA binding region. The active-site Nucleophile is the Asp271. The segment at 276–280 (TRIAR) is RNA binding; important for wobble base 34 recognition. Positions 309, 311, 314, and 340 each coordinate Zn(2+).

It belongs to the queuine tRNA-ribosyltransferase family. Homodimer. Within each dimer, one monomer is responsible for RNA recognition and catalysis, while the other monomer binds to the replacement base PreQ1. Zn(2+) serves as cofactor.

The enzyme catalyses 7-aminomethyl-7-carbaguanine + guanosine(34) in tRNA = 7-aminomethyl-7-carbaguanosine(34) in tRNA + guanine. The protein operates within tRNA modification; tRNA-queuosine biosynthesis. Functionally, catalyzes the base-exchange of a guanine (G) residue with the queuine precursor 7-aminomethyl-7-deazaguanine (PreQ1) at position 34 (anticodon wobble position) in tRNAs with GU(N) anticodons (tRNA-Asp, -Asn, -His and -Tyr). Catalysis occurs through a double-displacement mechanism. The nucleophile active site attacks the C1' of nucleotide 34 to detach the guanine base from the RNA, forming a covalent enzyme-RNA intermediate. The proton acceptor active site deprotonates the incoming PreQ1, allowing a nucleophilic attack on the C1' of the ribose to form the product. After dissociation, two additional enzymatic reactions on the tRNA convert PreQ1 to queuine (Q), resulting in the hypermodified nucleoside queuosine (7-(((4,5-cis-dihydroxy-2-cyclopenten-1-yl)amino)methyl)-7-deazaguanosine). The sequence is that of Queuine tRNA-ribosyltransferase from Lactococcus lactis subsp. cremoris (strain MG1363).